The chain runs to 214 residues: Neurogenin-3 (214 aa).

The segment covering 1 to 14 (MTPQPSGAPTVQVT) has biased composition (polar residues). The interval 1–98 (MTPQPSGAPT…NDRERNRMHN (98 aa)) is disordered. Basic and acidic residues predominate over residues 15–26 (RETERSFPRASE). Basic residues-rich tracts occupy residues 57–70 (APRK…GRSR) and 79–88 (KQRRSRRKKA). The bHLH domain occupies 83-135 (SRRKKANDRERNRMHNLNSALDALRGVLPTFPDDAKLTKIETLRFAHNYIWAL).

Efficient DNA binding requires dimerization with another bHLH protein. Interacts with ATOH8.

Its subcellular location is the nucleus. Acts as a transcriptional regulator. Together with NKX2-2, initiates transcriptional activation of NEUROD1. Involved in neurogenesis. Also required for the specification of a common precursor of the 4 pancreatic endocrine cell types. This Homo sapiens (Human) protein is Neurogenin-3 (NEUROG3).